Consider the following 160-residue polypeptide: MKLQVLPLSQEAFSAYGDVIETQQRDFFHINNGLVERYHDLALVEILEQDRTLISINRAQPANLPLTIHELERHPLGTQAFIPMKGEVFVVVVALGDDKPDLSTLRAFITNGEQGVNYHRNVWHHPLFAWQRVTDFLTIDRGGSDNCDVESIPEQELCFA.

This sequence belongs to the ureidoglycolate lyase family. Homodimer. The cofactor is Ni(2+).

The enzyme catalyses (S)-ureidoglycolate = urea + glyoxylate. The protein operates within nitrogen metabolism; (S)-allantoin degradation. Catalyzes the catabolism of the allantoin degradation intermediate (S)-ureidoglycolate, generating urea and glyoxylate. Involved in the anaerobic utilization of allantoin as sole nitrogen source. Reinforces the induction of genes involved in the degradation of allantoin and glyoxylate by producing glyoxylate. This is Ureidoglycolate lyase from Shigella flexneri serotype 5b (strain 8401).